The primary structure comprises 703 residues: Polyribonucleotide nucleotidyltransferase (703 aa).

2 residues coordinate Mg(2+): D486 and D492. Residues 553-614 (PRITTIWIKP…AACDAAIQMI (62 aa)) enclose the KH domain. Residues 624 to 692 (GKLYMGTVKK…KQGKIKLSRK (69 aa)) form the S1 motif domain.

It belongs to the polyribonucleotide nucleotidyltransferase family. Requires Mg(2+) as cofactor.

It is found in the cytoplasm. The catalysed reaction is RNA(n+1) + phosphate = RNA(n) + a ribonucleoside 5'-diphosphate. Its function is as follows. Involved in mRNA degradation. Catalyzes the phosphorolysis of single-stranded polyribonucleotides processively in the 3'- to 5'-direction. The protein is Polyribonucleotide nucleotidyltransferase of Trichlorobacter lovleyi (strain ATCC BAA-1151 / DSM 17278 / SZ) (Geobacter lovleyi).